We begin with the raw amino-acid sequence, 319 residues long: Cobalamin biosynthesis protein CobD (319 aa).

5 consecutive transmembrane segments (helical) span residues 56–76, 78–98, 153–173, 204–224, and 296–316; these read VMWL…LALA, GIHP…ALAG, VDGI…LAMA, VANF…AVLC, and LMWV…YWLV.

It belongs to the CobD/CbiB family.

The protein resides in the cell membrane. It participates in cofactor biosynthesis; adenosylcobalamin biosynthesis. In terms of biological role, converts cobyric acid to cobinamide by the addition of aminopropanol on the F carboxylic group. This is Cobalamin biosynthesis protein CobD from Klebsiella pneumoniae subsp. pneumoniae (strain ATCC 700721 / MGH 78578).